The sequence spans 520 residues: Hydroxymethylglutaryl-CoA synthase, cytoplasmic (520 aa).

Serine 4 is subject to Phosphoserine. 2 residues coordinate (3S)-3-hydroxy-3-methylglutaryl-CoA: aspartate 43 and alanine 44. Position 44–46 (44–46) interacts with CoA; the sequence is AGK. Residue lysine 46 is modified to N6-acetyllysine. The Proton donor/acceptor role is filled by glutamate 95. (3S)-3-hydroxy-3-methylglutaryl-CoA-binding residues include cysteine 129, asparagine 167, threonine 171, serine 221, and histidine 264. Catalysis depends on cysteine 129, which acts as the Acyl-thioester intermediate. Asparagine 167 serves as a coordination point for CoA. A CoA-binding site is contributed by serine 221. The active-site Proton donor/acceptor is the histidine 264. CoA-binding residues include lysine 269 and lysine 273. Residues lysine 273, asparagine 343, and serine 377 each contribute to the (3S)-3-hydroxy-3-methylglutaryl-CoA site. The residue at position 273 (lysine 273) is an N6-acetyllysine. The tract at residues 488–520 is disordered; that stretch reads TATEHIPSPAKKVPRLPATSAESESAVISNGEH. A phosphoserine mark is found at serine 495 and serine 516. Residues 507-520 show a composition bias toward polar residues; it reads SAESESAVISNGEH.

The protein belongs to the thiolase-like superfamily. HMG-CoA synthase family. As to quaternary structure, homodimer.

Its subcellular location is the cytoplasm. It carries out the reaction acetoacetyl-CoA + acetyl-CoA + H2O = (3S)-3-hydroxy-3-methylglutaryl-CoA + CoA + H(+). It functions in the pathway metabolic intermediate biosynthesis; (R)-mevalonate biosynthesis; (R)-mevalonate from acetyl-CoA: step 2/3. In terms of biological role, catalyzes the condensation of acetyl-CoA with acetoacetyl-CoA to form HMG-CoA, which is converted by HMG-CoA reductase (HMGCR) into mevalonate, a precursor for cholesterol synthesis. This chain is Hydroxymethylglutaryl-CoA synthase, cytoplasmic, found in Mus musculus (Mouse).